A 259-amino-acid polypeptide reads, in one-letter code: Bisphosphoglycerate mutase (259 aa).

The residue at position 2 (Ser-2) is an N-acetylserine. Substrate-binding positions include 10 to 17, 23 to 24, Arg-62, 89 to 92, Arg-100, and 116 to 117; these read RHGEGAWN, CS, ERHY, and RR. Residue His-11 is the Tele-phosphohistidine intermediate of the active site. Residue Glu-89 is the Proton donor/acceptor of the active site. A Phosphothreonine modification is found at Thr-122. Substrate is bound at residue 189-190; sequence GN.

The protein belongs to the phosphoglycerate mutase family. BPG-dependent PGAM subfamily. In terms of assembly, homodimer.

The catalysed reaction is (2R)-3-phospho-glyceroyl phosphate = (2R)-2,3-bisphosphoglycerate + H(+). It carries out the reaction (2R)-2-phosphoglycerate = (2R)-3-phosphoglycerate. Its activity is regulated as follows. At alkaline pH BPGM favors the synthase reaction; however, at lower pH the phosphatase reaction is dominant. Inhibited by citrate. Its function is as follows. Plays a major role in regulating hemoglobin oxygen affinity by controlling the levels of its allosteric effector 2,3-bisphosphoglycerate (2,3-BPG). Also exhibits mutase (EC 5.4.2.11) activity. In Macaca fascicularis (Crab-eating macaque), this protein is Bisphosphoglycerate mutase (BPGM).